Here is a 328-residue protein sequence, read N- to C-terminus: Malate dehydrogenase (328 aa).

11-17 (GAAGQIG) provides a ligand contact to NAD(+). Arg94 and Arg100 together coordinate substrate. Residues Asn107, Gln114, and 131 to 133 (VGN) contribute to the NAD(+) site. Residues Asn133 and Arg164 each coordinate substrate. His189 (proton acceptor) is an active-site residue.

Belongs to the LDH/MDH superfamily. MDH type 2 family.

The enzyme catalyses (S)-malate + NAD(+) = oxaloacetate + NADH + H(+). Functionally, catalyzes the reversible oxidation of malate to oxaloacetate. This is Malate dehydrogenase from Xanthomonas campestris pv. campestris (strain 8004).